Reading from the N-terminus, the 645-residue chain is MSKAVGIDLGTTYSCVAHFANDRVEIIANDQGNRTTPSFVAFTDTERLIGDAAKNQAAMNPANTVFDAKRLIGRKFDDHEVQGDIKHFPFKVVDKASKPMIQVEYKGETKTFSPEEISSMILGKMKETAEGFLGTTVKDAVVTVPAYFNDSQRQATKDAGTIAGLNVMRIINEPTAAAIAYGLDKKSEAEKNVLIFDLGGGTFDVSLLSIEDGIFEVKATAGDTHLGGEDFDNRLVNFFIQEFKRKNKKDISTNQRALRRLRTACERAKRTLSSSAQTSIEIDSLYEGIDFYTSITRARFEELCADLFRSTLEPVDKVLSDAKIDKSKVDEIVLVGGSTRIPKVQKLVSDYFNGKEPNRSINPDEAVAYGAAVQAAILSGDTSSKTQDLLLLDVAPLSLGIETAGGIMTKLIPRNSTIPTKKSETFSTYADNQPGVLIQVFEGERAQTKDNNLLGKFELSGIPPAPRGVPQIEVTFDIDANGILNVSALEKGTGKTQKITITNDKGRLSKEEIEKMVSEAEKFKEEDEKEASRVQAKNQLESYAYSLKNTLGEEQFKSKLDASEIEEVTKAADETISWLDANQTATQEEFADQQKELESKANPIMTKAYQAGATPSGAAGAAPGGFPGGAAPEPSNDGPTVEEVD.

The residue at position 2 (Ser-2) is an N-acetylserine. A disordered region spans residues 581-645 (ANQTATQEEF…NDGPTVEEVD (65 aa)). The span at 611–621 (AGATPSGAAGA) shows a compositional bias: low complexity.

The protein belongs to the heat shock protein 70 family. Binds human histatin-5, an antifungal peptide from saliva.

Its subcellular location is the cytoplasm. It is found in the secreted. It localises to the cell wall. Its function is as follows. Heat shock protein that may play a role in the transport of polypeptides both across the mitochondrial membranes and into the endoplasmic reticulum. Functionally, acts as a highly immunodominant antigen. Plays a role in the sensitivity to, and the import of candidacidal beta-defensin peptides. HSP70/SSA1 and SSA2 bind histatin-5, a peptide from human saliva, and mediates its fungicidal activity. SSA2 facilitates fungicidal activity of Hst 5 in binding and intracellular translocation, whereas HSP70/SSA1 appears to have a lesser functional role in Hst 5 toxicity. In Candida albicans (strain SC5314 / ATCC MYA-2876) (Yeast), this protein is Heat shock protein SSA2.